A 159-amino-acid polypeptide reads, in one-letter code: NADH-quinone oxidoreductase subunit I (159 aa).

4Fe-4S ferredoxin-type domains lie at 51 to 80 (RRYE…IESD) and 90 to 119 (TRYD…EGPN). 8 residues coordinate [4Fe-4S] cluster: Cys-60, Cys-63, Cys-66, Cys-70, Cys-99, Cys-102, Cys-105, and Cys-109.

The protein belongs to the complex I 23 kDa subunit family. In terms of assembly, NDH-1 is composed of 14 different subunits. Subunits NuoA, H, J, K, L, M, N constitute the membrane sector of the complex. Requires [4Fe-4S] cluster as cofactor.

The protein localises to the cell inner membrane. The catalysed reaction is a quinone + NADH + 5 H(+)(in) = a quinol + NAD(+) + 4 H(+)(out). NDH-1 shuttles electrons from NADH, via FMN and iron-sulfur (Fe-S) centers, to quinones in the respiratory chain. The immediate electron acceptor for the enzyme in this species is believed to be ubiquinone. Couples the redox reaction to proton translocation (for every two electrons transferred, four hydrogen ions are translocated across the cytoplasmic membrane), and thus conserves the redox energy in a proton gradient. The chain is NADH-quinone oxidoreductase subunit I from Rickettsia typhi (strain ATCC VR-144 / Wilmington).